We begin with the raw amino-acid sequence, 507 residues long: Glycine, alanine and asparagine-rich protein (507 aa).

The first 17 residues, 1 to 17 (MLRVPLLVLCLALSVGA), serve as a signal peptide directing secretion. The stretch at 158-185 (SAQALASATAELQAAQDAYDQASAYAEA) forms a coiled coil. Over residues 462–498 (GNGNGGNGRNGNGGNGRNGNGGNGGNGNGRNGRGGRY) the composition is skewed to gly residues. Residues 462–507 (GNGNGGNGRNGNGGNGRNGNGGNGGNGNGRNGRGGRYYYGSSDYYY) are disordered.

In terms of tissue distribution, component of the acid-soluble and acid-insoluble organic matrix of calcified shell layers (at protein level).

The protein localises to the secreted. The protein is Glycine, alanine and asparagine-rich protein of Haliotis asinina (Donkey's ear abalone).